Consider the following 551-residue polypeptide: MNRRRFIKGSMAMAAVCGSSGIASLFSQAAFAAESDIADGKIVRFDFAGLQSMAQALAKKPWGGAPGPLPDTLANLTPQAYNSIQYDAAHSLWNGVANRQLDIQFFHVGMGFRRRVRMFSVDTTTHLAREIHFRPELFKYNDAGVDTTQLEGQSDLGFAGFRVFKAPELARRDVVSFLGASYFRAVDDTYQYGLSARGLAIDTYTDGQEEFPDFTAFWFDTAKPGDTTFTVYALLDSASVTGAYKFVIHCEKSQVIMDVENHLYARKDIKQLGIAPMTSMFSCGNNERRVCDTIHPQIHDSDRLAMWRGNGEWICRPLNNPQKLQFNAYMDDNPKGFGLLQLDRDFSHYQDVMGWYNKRPSLWVEPRNKWGKGAVSLMEIPTTGETLDNVVCFWQPEKAIKAGDTLAFNYRLYWSAQPPVQSPLARVMATRTGMGGFPEGWAPGEHYPDKWARRFAIDFVGGDLKAAAPKGIEPVITLSSGEAKQIEILYVEPFDGYRIQFDWYPTSDSTAPVDMRMFLRCQGEAISETWLYQYFPPAPDKRRYVDDRIMR.

Residues 1–32 (MNRRRFIKGSMAMAAVCGSSGIASLFSQAAFA) constitute a signal peptide (tat-type signal).

This sequence belongs to the OpgD/OpgG family. Post-translationally, predicted to be exported by the Tat system. The position of the signal peptide cleavage has not been experimentally proven.

The protein localises to the periplasm. The protein operates within glycan metabolism; osmoregulated periplasmic glucan (OPG) biosynthesis. Probably involved in the control of the structural glucose backbone of osmoregulated periplasmic glucans (OPGs). This is Glucans biosynthesis protein D (mdoD) from Salmonella typhimurium (strain LT2 / SGSC1412 / ATCC 700720).